The sequence spans 852 residues: Lon protease homolog 2, peroxisomal (852 aa).

Ser-2 is subject to N-acetylserine. One can recognise a Lon N-terminal domain in the interval 13–222 (LPLLLTHESV…MTIPLLVRQI (210 aa)). Residue 375 to 382 (GPPGVGKT) coordinates ATP. The Lon proteolytic domain occupies 651–837 (LSQPGVAIGL…DEVLNAAFDG (187 aa)). Catalysis depends on residues Ser-743 and Lys-786. The Microbody targeting signal signature appears at 850-852 (SKL).

This sequence belongs to the peptidase S16 family. Interacts with PEX5. Interacts with TYSND1. May interact with enzymes involved in beta-oxidation of fatty acids, including ACOX1/AOX.

Its subcellular location is the peroxisome matrix. It catalyses the reaction Hydrolysis of proteins in presence of ATP.. Its function is as follows. ATP-dependent serine protease that mediates the selective degradation of misfolded and unassembled polypeptides in the peroxisomal matrix. Necessary for type 2 peroxisome targeting signal (PTS2)-containing protein processing and facilitates peroxisome matrix protein import. May indirectly regulate peroxisomal fatty acid beta-oxidation through degradation of the self-processed forms of TYSND1. In Mus musculus (Mouse), this protein is Lon protease homolog 2, peroxisomal (Lonp2).